The sequence spans 210 residues: Somatotropin (210 aa).

The signal sequence occupies residues 1–22 (MGQVFLLMPVLLVSCFLSQGAA). His-38 contributes to the Zn(2+) binding site. Cys-71 and Cys-183 form a disulfide bridge. Glu-192 is a Zn(2+) binding site. Cys-200 and Cys-208 are joined by a disulfide.

The protein belongs to the somatotropin/prolactin family.

Its subcellular location is the secreted. Functionally, growth hormone plays an important role in growth control and is involved in the regulation of several anabolic processes. Implicated as an osmoregulatory substance important for seawater adaptation. This chain is Somatotropin (gh), found in Oncorhynchus kisutch (Coho salmon).